Reading from the N-terminus, the 177-residue chain is RNA pyrophosphohydrolase (177 aa).

In terms of domain architecture, Nudix hydrolase spans 6–149 (GYRPNVGIVI…KRDVYRRVMK (144 aa)). A Nudix box motif is present at residues 38-59 (GGINPGESAEQAMYRELFEEVG).

It belongs to the Nudix hydrolase family. RppH subfamily. Requires a divalent metal cation as cofactor.

Functionally, accelerates the degradation of transcripts by removing pyrophosphate from the 5'-end of triphosphorylated RNA, leading to a more labile monophosphorylated state that can stimulate subsequent ribonuclease cleavage. This Cronobacter sakazakii (strain ATCC BAA-894) (Enterobacter sakazakii) protein is RNA pyrophosphohydrolase.